Consider the following 314-residue polypeptide: tRNA dimethylallyltransferase (314 aa).

13-20 is a binding site for ATP; that stretch reads GPTAVGKT. 15–20 is a binding site for substrate; that stretch reads TAVGKT. Residues 38–41 are interaction with substrate tRNA; sequence DSMQ.

Belongs to the IPP transferase family. Monomer. The cofactor is Mg(2+).

The enzyme catalyses adenosine(37) in tRNA + dimethylallyl diphosphate = N(6)-dimethylallyladenosine(37) in tRNA + diphosphate. Catalyzes the transfer of a dimethylallyl group onto the adenine at position 37 in tRNAs that read codons beginning with uridine, leading to the formation of N6-(dimethylallyl)adenosine (i(6)A). This is tRNA dimethylallyltransferase from Bacillus velezensis (strain DSM 23117 / BGSC 10A6 / LMG 26770 / FZB42) (Bacillus amyloliquefaciens subsp. plantarum).